Consider the following 179-residue polypeptide: UPF0398 protein SSU05_0416 (179 aa).

This sequence belongs to the UPF0398 family.

In Streptococcus suis (strain 05ZYH33), this protein is UPF0398 protein SSU05_0416.